The chain runs to 365 residues: Class I histocompatibility antigen, Gogo-A*0501 alpha chain (365 aa).

The signal sequence occupies residues Met1–Ala24. Residues Gly25–Asp114 form an alpha-1 region. Topologically, residues Gly25 to Ile308 are extracellular. A glycan (N-linked (GlcNAc...) asparagine) is linked at Asn110. Residues Gly115–Thr206 form an alpha-2 region. Cystine bridges form between Cys125–Cys188 and Cys227–Cys283. Positions Asp207–Trp298 are alpha-3. Residues Pro209–Thr295 form the Ig-like C1-type domain. Residues Glu299–Ile308 form a connecting peptide region. Residues Val309–Trp332 traverse the membrane as a helical segment. The Cytoplasmic portion of the chain corresponds to Arg333–Val365. The disordered stretch occupies residues Asp338 to Val365. A compositionally biased stretch (low complexity) spans Gly342–Ser359. Ser343 carries the post-translational modification Phosphoserine. Tyr344 is subject to Phosphotyrosine. Residues Ser345, Ser349, Ser352, Ser356, and Ser359 each carry the phosphoserine modification.

This sequence belongs to the MHC class I family. As to quaternary structure, heterodimer of an alpha chain and a beta chain (beta-2-microglobulin).

The protein localises to the membrane. Its function is as follows. Involved in the presentation of foreign antigens to the immune system. The chain is Class I histocompatibility antigen, Gogo-A*0501 alpha chain from Gorilla gorilla gorilla (Western lowland gorilla).